Here is an 83-residue protein sequence, read N- to C-terminus: U-actitoxin-Aeq6b (83 aa).

A signal peptide spans 1–20; that stretch reads MIYKAVFVCLVLVLLGDVFC. Positions 21–36 are excised as a propeptide; it reads SPRNSGGGTLNDNPFE. Residue Pro-82 is modified to Proline amide.

In terms of processing, contains 3 disulfide bonds. Expressed by acrorhagi.

The protein resides in the secreted. It is found in the nematocyst. Its function is as follows. Toxin. In Actinia equina (Beadlet anemone), this protein is U-actitoxin-Aeq6b.